The sequence spans 1264 residues: Box A-binding factor (1264 aa).

Basic and acidic residues predominate over residues 1-11 (MTKTTKPKEKA). Disordered stretches follow at residues 1 to 25 (MTKTTKPKEKAAAGGAVIGSGSGLG), 161 to 200 (TASDTAATSEAAIDDDPSAINTNNNNNNSKAQNDASESVK), 234 to 253 (LISHHQQEQHQQAQQQQHQQ), 405 to 463 (QLHQ…HALS), 523 to 585 (NQTQ…SAAT), and 599 to 627 (HNSSLEDGYGSPRSSHSGGGGGGTLPAFQ). Residues 16–25 (AVIGSGSGLG) are compositionally biased toward gly residues. Residues 161-171 (TASDTAATSEA) are compositionally biased toward low complexity. Residues 189–198 (SKAQNDASES) are compositionally biased toward polar residues. Residues 409–421 (QQHHHQQQLHHHQ) show a composition bias toward basic residues. Low complexity-rich tracts occupy residues 422–438 (QQQQQLYHQQQQQQQQQ), 447–459 (STSSAGGDSPSSS), and 523–554 (NQTQAHLQQQHHQQQQQQHQQHQQQQLQQQQQ). Residues 555-564 (QHHHNQHQHH) show a composition bias toward basic residues. Composition is skewed to low complexity over residues 565-585 (NSSSSSPGPAGLHHSSSSAAT) and 599-614 (HNSSLEDGYGSPRSSH). The GATA-type zinc finger occupies 803-827 (CSNCHTTHTSLWRRNPAGEPVCNAC). 3 disordered regions span residues 841 to 867 (TMKKDTIQKRKRKPKGTKSEKSKSKSK), 899 to 1048 (DDMK…SNEN), and 1181 to 1202 (EEMDQSQQQQQQQQHQQQQHGE). Composition is skewed to low complexity over residues 909–950 (PYNS…GSTS) and 985–1007 (QMSPLNMQQHQQQQSCSMQHSPS). The span at 1008-1023 (TPTSIFNTPSPTHQLH) shows a compositional bias: polar residues. 2 stretches are compositionally biased toward low complexity: residues 1024 to 1048 (NNNNNNNNSSIFNNNNNNNSSSNEN) and 1185 to 1200 (QSQQQQQQQQHQQQQH). 2 positions are modified to phosphoserine: S1208 and S1210.

Interacts (via GATA-type Zn-finger domain) with Bfc; this interaction enhances srp binding to the promoter of crq/croquemort.

It localises to the nucleus. In terms of biological role, may function as a transcriptional activator protein and may play a key role in the organogenesis of the fat body. Binds a sequence element (5'-[TA]GATAA-3') found in the larval promoters of all known alcohol dehydrogenase (ADH) genes. Acts as a homeotic gene downstream of the terminal gap gene HKB to promote morphogenesis and differentiation of anterior and posterior midgut. Together with transcriptional cofactor Bfc directly binds the promoter of phagocytic receptor crq/croquemort to upregulate its expression and stimulate efferocytosis in response to apoptotic cells, including during embryogenesis. The protein is Box A-binding factor (srp) of Drosophila melanogaster (Fruit fly).